Reading from the N-terminus, the 569-residue chain is Proline--tRNA ligase (569 aa).

This sequence belongs to the class-II aminoacyl-tRNA synthetase family. ProS type 1 subfamily. As to quaternary structure, homodimer.

It localises to the cytoplasm. It carries out the reaction tRNA(Pro) + L-proline + ATP = L-prolyl-tRNA(Pro) + AMP + diphosphate. Its function is as follows. Catalyzes the attachment of proline to tRNA(Pro) in a two-step reaction: proline is first activated by ATP to form Pro-AMP and then transferred to the acceptor end of tRNA(Pro). As ProRS can inadvertently accommodate and process non-cognate amino acids such as alanine and cysteine, to avoid such errors it has two additional distinct editing activities against alanine. One activity is designated as 'pretransfer' editing and involves the tRNA(Pro)-independent hydrolysis of activated Ala-AMP. The other activity is designated 'posttransfer' editing and involves deacylation of mischarged Ala-tRNA(Pro). The misacylated Cys-tRNA(Pro) is not edited by ProRS. The protein is Proline--tRNA ligase of Campylobacter jejuni subsp. jejuni serotype O:23/36 (strain 81-176).